We begin with the raw amino-acid sequence, 445 residues long: 23S rRNA (uracil(1939)-C(5))-methyltransferase RlmD (445 aa).

Residues 12-70 (SKQLSSKLSLNVTQLDHLGAGIAHHQGKIVFINGALPGETVQVQLTEQKKKFSRAKLLK) enclose the TRAM domain. [4Fe-4S] cluster-binding residues include cysteine 83, cysteine 89, cysteine 92, and cysteine 171. S-adenosyl-L-methionine is bound by residues glutamine 278, phenylalanine 307, asparagine 312, glutamate 328, aspartate 355, and aspartate 375. Cysteine 401 acts as the Nucleophile in catalysis.

The protein belongs to the class I-like SAM-binding methyltransferase superfamily. RNA M5U methyltransferase family. RlmD subfamily.

It catalyses the reaction uridine(1939) in 23S rRNA + S-adenosyl-L-methionine = 5-methyluridine(1939) in 23S rRNA + S-adenosyl-L-homocysteine + H(+). Its function is as follows. Catalyzes the formation of 5-methyl-uridine at position 1939 (m5U1939) in 23S rRNA. This Shewanella piezotolerans (strain WP3 / JCM 13877) protein is 23S rRNA (uracil(1939)-C(5))-methyltransferase RlmD.